Reading from the N-terminus, the 489-residue chain is FAD-linked oxidoreductase tazG (489 aa).

The signal sequence occupies residues 1–17 (MVAFSAILQTALGLSAA). N-linked (GlcNAc...) asparagine glycosylation is present at N38. One can recognise an FAD-binding PCMH-type domain in the interval 55-224 (APSYGAGAIK…TSATYRLPEV (170 aa)). 2 N-linked (GlcNAc...) asparagine glycosylation sites follow: N242 and N306.

This sequence belongs to the oxygen-dependent FAD-linked oxidoreductase family. Requires FAD as cofactor.

Its pathway is secondary metabolite biosynthesis. In terms of biological role, FAD-linked oxidoreductase; part of the gene cluster that mediates the biosynthesis of azaterrilone A and other azaphilones, a class of fungal metabolites characterized by a highly oxygenated pyrano-quinone bicyclic core and exhibiting a broad range of bioactivities. The first step of the pathway begins with the non-reducing polyketide synthase tazA that assembles one acetyl-CoA starter unit, five malonyl-CoA units, and catalyzes a series of Claisen condensations, methylation, PT-mediated cyclization, and finally releases the first hexaketide precursor through the R-domain. The tazA product then undergoes reduction on its terminal ketone and the following pyran-ring formation by yet undetermined enzyme(s). Dehydration and enoyl reduction, possibly involving the trans-enoyl reductase tazE leads to the next intermediate. TazD is predicted as an acetyltransferase and might catalyze the acetylation steps leading to the synthesis of azaterrilone A. Azaterrilone A is not the final product of the taz pathway and both the highly reducing polyketide synthase tazB and the dual enzyme tazHJ catalyze late steps of the pathway, leading to the production of the 2 final stereoisomers that contain additional polyketide modification whose structures have still to be determined. The polypeptide is FAD-linked oxidoreductase tazG (Aspergillus terreus (strain NIH 2624 / FGSC A1156)).